Here is a 97-residue protein sequence, read N- to C-terminus: UPF0235 protein HAPS_1504 (97 aa).

It belongs to the UPF0235 family.

The chain is UPF0235 protein HAPS_1504 from Glaesserella parasuis serovar 5 (strain SH0165) (Haemophilus parasuis).